The sequence spans 312 residues: Bifunctional pinoresinol-lariciresinol reductase (312 aa).

NADP(+)-binding positions include 11 to 17, Arg36, and Lys45; that span reads GGTGYIG. The active-site Proton acceptor is the Lys138. Arg142 is an NADP(+) binding site. Substrate is bound at residue His270.

Belongs to the NmrA-type oxidoreductase family. Isoflavone reductase subfamily. As to quaternary structure, dimer.

It carries out the reaction (+)-lariciresinol + NADP(+) = (+)-pinoresinol + NADPH + H(+). It catalyses the reaction (-)-secoisolariciresinol + NADP(+) = (+)-lariciresinol + NADPH + H(+). Its function is as follows. Reductase involved in lignan biosynthesis. Catalyzes the enantioselective sequential conversion of (+)-pinoresinol into (+)-lariciresinol and of (+)-lariciresinol into (-)-secoisolariciresinol. Abstracts the 4R-hydride from the NADPH cofactor during catalysis. In Thuja plicata (Western red-cedar), this protein is Bifunctional pinoresinol-lariciresinol reductase.